A 444-amino-acid polypeptide reads, in one-letter code: Glutamyl-tRNA reductase (444 aa).

Substrate contacts are provided by residues 49–52 (TCNR), Ser109, 114–116 (ETQ), and Gln120. Cys50 acts as the Nucleophile in catalysis. 189-194 (GAGKMG) is an NADP(+) binding site.

The protein belongs to the glutamyl-tRNA reductase family. In terms of assembly, homodimer.

The enzyme catalyses (S)-4-amino-5-oxopentanoate + tRNA(Glu) + NADP(+) = L-glutamyl-tRNA(Glu) + NADPH + H(+). The protein operates within porphyrin-containing compound metabolism; protoporphyrin-IX biosynthesis; 5-aminolevulinate from L-glutamyl-tRNA(Glu): step 1/2. Its function is as follows. Catalyzes the NADPH-dependent reduction of glutamyl-tRNA(Glu) to glutamate 1-semialdehyde (GSA). The chain is Glutamyl-tRNA reductase from Bacillus cereus (strain ZK / E33L).